Consider the following 76-residue polypeptide: U-scoloptoxin(15)-Ssd3b (76 aa).

Residues 1-23 (MEKKIIFLCFLVALLTFPEFISS) form the signal peptide.

Post-translationally, contains 2 disulfide bonds. As to expression, expressed by the venom gland.

The protein resides in the secreted. This is U-scoloptoxin(15)-Ssd3b from Scolopendra dehaani (Thai centipede).